Here is a 592-residue protein sequence, read N- to C-terminus: Aspartate--tRNA(Asp/Asn) ligase (592 aa).

Glu177 is a binding site for L-aspartate. Positions 201-204 (QIFK) are aspartate. Residues Arg223 and His452 each contribute to the L-aspartate site. 223 to 225 (RDE) contacts ATP. Glu486 is a binding site for ATP. Arg493 contributes to the L-aspartate binding site. Residue 538–541 (GIDR) participates in ATP binding.

This sequence belongs to the class-II aminoacyl-tRNA synthetase family. Type 1 subfamily. Homodimer.

It is found in the cytoplasm. It catalyses the reaction tRNA(Asx) + L-aspartate + ATP = L-aspartyl-tRNA(Asx) + AMP + diphosphate. Its function is as follows. Aspartyl-tRNA synthetase with relaxed tRNA specificity since it is able to aspartylate not only its cognate tRNA(Asp) but also tRNA(Asn). Reaction proceeds in two steps: L-aspartate is first activated by ATP to form Asp-AMP and then transferred to the acceptor end of tRNA(Asp/Asn). This is Aspartate--tRNA(Asp/Asn) ligase from Anaplasma marginale (strain Florida).